Here is a 198-residue protein sequence, read N- to C-terminus: Glycerol-3-phosphate acyltransferase 2 (198 aa).

4 helical membrane passes run 4–24 (TYLL…LVVG), 71–91 (LPII…AVLG), 113–133 (LLCY…SLLF), and 147–167 (VVAV…AMCL).

This sequence belongs to the PlsY family. Probably interacts with PlsX.

The protein localises to the cell membrane. It catalyses the reaction an acyl phosphate + sn-glycerol 3-phosphate = a 1-acyl-sn-glycero-3-phosphate + phosphate. Its pathway is lipid metabolism; phospholipid metabolism. Functionally, catalyzes the transfer of an acyl group from acyl-phosphate (acyl-PO(4)) to glycerol-3-phosphate (G3P) to form lysophosphatidic acid (LPA). This enzyme utilizes acyl-phosphate as fatty acyl donor, but not acyl-CoA or acyl-ACP. The polypeptide is Glycerol-3-phosphate acyltransferase 2 (Bacillus cereus (strain ATCC 10987 / NRS 248)).